A 1372-amino-acid chain; its full sequence is DNA-directed RNA polymerase subunit beta' (1372 aa).

Cysteine 69, cysteine 71, cysteine 84, and cysteine 87 together coordinate Zn(2+). Residues aspartate 460, aspartate 462, and aspartate 464 each coordinate Mg(2+). Cysteine 808, cysteine 882, cysteine 889, and cysteine 892 together coordinate Zn(2+).

This sequence belongs to the RNA polymerase beta' chain family. The RNAP catalytic core consists of 2 alpha, 1 beta, 1 beta' and 1 omega subunit. When a sigma factor is associated with the core the holoenzyme is formed, which can initiate transcription. It depends on Mg(2+) as a cofactor. Requires Zn(2+) as cofactor.

The enzyme catalyses RNA(n) + a ribonucleoside 5'-triphosphate = RNA(n+1) + diphosphate. DNA-dependent RNA polymerase catalyzes the transcription of DNA into RNA using the four ribonucleoside triphosphates as substrates. The polypeptide is DNA-directed RNA polymerase subunit beta' (Rickettsia akari (strain Hartford)).